Here is a 229-residue protein sequence, read N- to C-terminus: Enolase-phosphatase E1 (229 aa).

The segment covering 208–218 (DTQSTHRQVSS) has biased composition (polar residues). The segment at 208–229 (DTQSTHRQVSSFDDIHPEQIPT) is disordered. The segment covering 220-229 (DDIHPEQIPT) has biased composition (basic and acidic residues).

The protein belongs to the HAD-like hydrolase superfamily. MasA/MtnC family. As to quaternary structure, monomer. Mg(2+) is required as a cofactor.

The catalysed reaction is 5-methylsulfanyl-2,3-dioxopentyl phosphate + H2O = 1,2-dihydroxy-5-(methylsulfanyl)pent-1-en-3-one + phosphate. It participates in amino-acid biosynthesis; L-methionine biosynthesis via salvage pathway; L-methionine from S-methyl-5-thio-alpha-D-ribose 1-phosphate: step 3/6. It functions in the pathway amino-acid biosynthesis; L-methionine biosynthesis via salvage pathway; L-methionine from S-methyl-5-thio-alpha-D-ribose 1-phosphate: step 4/6. Its function is as follows. Bifunctional enzyme that catalyzes the enolization of 2,3-diketo-5-methylthiopentyl-1-phosphate (DK-MTP-1-P) into the intermediate 2-hydroxy-3-keto-5-methylthiopentenyl-1-phosphate (HK-MTPenyl-1-P), which is then dephosphorylated to form the acireductone 1,2-dihydroxy-3-keto-5-methylthiopentene (DHK-MTPene). This chain is Enolase-phosphatase E1, found in Cronobacter sakazakii (Enterobacter sakazakii).